Consider the following 241-residue polypeptide: Pyridoxine/pyridoxamine 5'-phosphate oxidase (241 aa).

The segment at 1–35 (MASNPPSAASPRRTAVSPGADRPDGPDPAGQRQSY) is disordered. Residues 32–35 (RQSY) and K92 each bind substrate. FMN contacts are provided by residues 87-92 (RTVLLK), 102-103 (YT), R108, K109, and Q131. Substrate-binding residues include Y149, R153, and S157. Residues 166–167 (QS) and W212 contribute to the FMN site. 218 to 220 (RLH) is a binding site for substrate. Position 222 (R222) interacts with FMN.

It belongs to the pyridoxamine 5'-phosphate oxidase family. Homodimer. Requires FMN as cofactor.

It carries out the reaction pyridoxamine 5'-phosphate + O2 + H2O = pyridoxal 5'-phosphate + H2O2 + NH4(+). The catalysed reaction is pyridoxine 5'-phosphate + O2 = pyridoxal 5'-phosphate + H2O2. It functions in the pathway cofactor metabolism; pyridoxal 5'-phosphate salvage; pyridoxal 5'-phosphate from pyridoxamine 5'-phosphate: step 1/1. Its pathway is cofactor metabolism; pyridoxal 5'-phosphate salvage; pyridoxal 5'-phosphate from pyridoxine 5'-phosphate: step 1/1. In terms of biological role, catalyzes the oxidation of either pyridoxine 5'-phosphate (PNP) or pyridoxamine 5'-phosphate (PMP) into pyridoxal 5'-phosphate (PLP). The sequence is that of Pyridoxine/pyridoxamine 5'-phosphate oxidase from Frankia alni (strain DSM 45986 / CECT 9034 / ACN14a).